A 747-amino-acid chain; its full sequence is H(+)/Cl(-) exchange transporter 4 (747 aa).

Residues 1–50 are required for localization in the endoplasmic reticulum; the sequence is MDFLDEPFPDVGTYEDFHTIDWLREKSRDTDRHRKITSKSKESIWEFIKS. Topologically, residues 1–54 are cytoplasmic; the sequence is MDFLDEPFPDVGTYEDFHTIDWLREKSRDTDRHRKITSKSKESIWEFIKSLLDA. 2 helical membrane passes run 55–92 and 138–161; these read WSGWVVMLLIGLLAGTLAGVIDLAVDWMTDLKEGVCLS and LNYLMYILWALLFAFLAVSLVRVF. Residues 167 to 171 carry the Selectivity filter part_1 motif; it reads GSGIP. S168 contacts chloride. The segment at residues 170 to 177 is an intramembrane region (helical); it reads IPEIKTIL. The next 2 membrane-spanning stretches (helical) occupy residues 187–205 and 211–230; these read GKWTLLIKTVTLVLVVSSG and EGPLVHVACCCGNFFSSLFS. The Selectivity filter part_2 motif lies at 209–213; that stretch reads GKEGP. 2 intramembrane regions (helical) span residues 242–254 and 258–266; these read VLSAAAAAGVSVA and PIGGVLFSL. Helical transmembrane passes span 278–296, 320–345, 352–372, 429–449, and 454–473; these read LWRSFFAALVAAFTLRSIN, FPFILLGVFGGLWGTVFTRCNIAWCR, LGKYPVLEVIVVTAITAIIAY, MWQLALALIFKIVITIFTFGM, and GLFIPSMAVGAMAGRMVGIG. Residues 454–458 carry the Selectivity filter part_3 motif; the sequence is GLFIP. Residue F456 coordinates chloride. Intramembrane regions (helical) lie at residues 501–515 and 519–530; these read GLYAMVGAAACLGGV and TVSLVVIMFELT. An intramembrane region (note=Loop between two helices) is located at residues 531–534; the sequence is GGLE. A helical membrane pass occupies residues 535 to 553; that stretch reads YIVPLMAAAVTSKWVADAF. Residues 554–747 lie on the Cytoplasmic side of the membrane; it reads GKEGIYEAHI…NQDPESIIFN (194 aa). Y559 serves as a coordination point for chloride. The CBS 1 domain maps to 587-653; the sequence is MRPRRGEPPL…AIKNARQRQE (67 aa). ATP is bound by residues S597 and 618-620; that span reads YNG. Residues 654–683 form a required for localization in the endoplasmic reticulum region; sequence GIVSNSIMYFTEEPPELPANSPHPLKLRRI. In terms of domain architecture, CBS 2 spans 684–742; the sequence is LNLSPFTVTDHTPMETVVDIFRKLGLRQCLVTRSGRLLGIITKKDVLRHMAQMANQDPE. 725 to 728 contributes to the ATP binding site; that stretch reads TKKD.

The protein belongs to the chloride channel (TC 2.A.49) family. ClC-4/CLCN4 subfamily. As to expression, strongly expressed in liver and brain, but also in heart, muscle, kidney and spleen.

The protein resides in the early endosome membrane. Its subcellular location is the late endosome membrane. It localises to the endoplasmic reticulum membrane. It is found in the lysosome membrane. The protein localises to the recycling endosome membrane. Functionally, strongly outwardly rectifying, electrogenic H(+)/Cl(-)exchanger which mediates the exchange of chloride ions against protons. The CLC channel family contains both chloride channels and proton-coupled anion transporters that exchange chloride or another anion for protons. The presence of conserved gating glutamate residues is typical for family members that function as antiporters. The sequence is that of H(+)/Cl(-) exchange transporter 4 (Clcn4) from Rattus norvegicus (Rat).